Reading from the N-terminus, the 213-residue chain is Imidazole glycerol phosphate synthase subunit HisH (213 aa).

Residues 4 to 213 (SIAIVDYGMG…LYRNFVHWKP (210 aa)) form the Glutamine amidotransferase type-1 domain. The active-site Nucleophile is the Cys-83. Residues His-193 and Glu-195 contribute to the active site.

As to quaternary structure, heterodimer of HisH and HisF.

Its subcellular location is the cytoplasm. It catalyses the reaction 5-[(5-phospho-1-deoxy-D-ribulos-1-ylimino)methylamino]-1-(5-phospho-beta-D-ribosyl)imidazole-4-carboxamide + L-glutamine = D-erythro-1-(imidazol-4-yl)glycerol 3-phosphate + 5-amino-1-(5-phospho-beta-D-ribosyl)imidazole-4-carboxamide + L-glutamate + H(+). The enzyme catalyses L-glutamine + H2O = L-glutamate + NH4(+). Its pathway is amino-acid biosynthesis; L-histidine biosynthesis; L-histidine from 5-phospho-alpha-D-ribose 1-diphosphate: step 5/9. Functionally, IGPS catalyzes the conversion of PRFAR and glutamine to IGP, AICAR and glutamate. The HisH subunit catalyzes the hydrolysis of glutamine to glutamate and ammonia as part of the synthesis of IGP and AICAR. The resulting ammonia molecule is channeled to the active site of HisF. In Burkholderia lata (strain ATCC 17760 / DSM 23089 / LMG 22485 / NCIMB 9086 / R18194 / 383), this protein is Imidazole glycerol phosphate synthase subunit HisH.